Consider the following 425-residue polypeptide: Glutamate-1-semialdehyde 2,1-aminomutase (425 aa).

N6-(pyridoxal phosphate)lysine is present on K264.

It belongs to the class-III pyridoxal-phosphate-dependent aminotransferase family. HemL subfamily. Homodimer. It depends on pyridoxal 5'-phosphate as a cofactor.

It localises to the cytoplasm. It carries out the reaction (S)-4-amino-5-oxopentanoate = 5-aminolevulinate. It functions in the pathway porphyrin-containing compound metabolism; protoporphyrin-IX biosynthesis; 5-aminolevulinate from L-glutamyl-tRNA(Glu): step 2/2. The protein is Glutamate-1-semialdehyde 2,1-aminomutase of Leptospira biflexa serovar Patoc (strain Patoc 1 / Ames).